The following is a 110-amino-acid chain: UPF0251 protein PH0803 (110 aa).

It belongs to the UPF0251 family.

The chain is UPF0251 protein PH0803 from Pyrococcus horikoshii (strain ATCC 700860 / DSM 12428 / JCM 9974 / NBRC 100139 / OT-3).